The sequence spans 175 residues: Adenine phosphoribosyltransferase (175 aa).

It belongs to the purine/pyrimidine phosphoribosyltransferase family. Homodimer.

Its subcellular location is the cytoplasm. The catalysed reaction is AMP + diphosphate = 5-phospho-alpha-D-ribose 1-diphosphate + adenine. It participates in purine metabolism; AMP biosynthesis via salvage pathway; AMP from adenine: step 1/1. Catalyzes a salvage reaction resulting in the formation of AMP, that is energically less costly than de novo synthesis. This Pelagibacter ubique (strain HTCC1062) protein is Adenine phosphoribosyltransferase.